The sequence spans 260 residues: MELDEVIITRAIFEEYSKTFLEYTDIDVALVGGGPANLVAAKYLAEAGAKVAIYEQKLSLGGGMWAGGMMFPRIVVQEEACRVLDDFGIRYKEYEPGYFVANSVESVGKLIAGATSAGAEVFNLVSFEDIMIRENDRVTGIVINWGPVTTQRLHVDPLMIRTKLVIDGTGHDAVVCNTILRKIPNAKIGEFGILGEKPMWSEVGERLAVDATQEIYPGLIVAGMAANAATRAPRMGPVFGGMLLSGEKAAKLALDRLKKI.

Residues Ala-36, 55 to 56 (EQ), Gly-63, and 154 to 156 (HVD) each bind NAD(+). Residues Asp-156 and His-171 each contribute to the Fe cation site. Residue Met-224 participates in NAD(+) binding. Residue Arg-234 participates in glycine binding.

It belongs to the THI4 family. In terms of assembly, homooctamer; tetramer of dimers. It depends on Fe(2+) as a cofactor.

The enzyme catalyses hydrogen sulfide + glycine + NAD(+) = ADP-5-ethyl-4-methylthiazole-2-carboxylate + nicotinamide + 3 H2O + H(+). Its pathway is cofactor biosynthesis; thiamine diphosphate biosynthesis. In terms of biological role, involved in the biosynthesis of the thiazole moiety of thiamine. Catalyzes the conversion of NAD and glycine to adenosine diphosphate 5-(2-hydroxyethyl)-4-methylthiazole-2-carboxylate (ADT), an adenylated thiazole intermediate, using free sulfide as a source of sulfur. This Methanosarcina mazei (strain ATCC BAA-159 / DSM 3647 / Goe1 / Go1 / JCM 11833 / OCM 88) (Methanosarcina frisia) protein is Thiamine thiazole synthase.